The sequence spans 388 residues: Galactokinase (388 aa).

33–36 (EHTD) lines the substrate pocket. Residues Ser67 and 125 to 131 (GSGLSSS) contribute to the ATP site. Ser131 and Glu163 together coordinate Mg(2+). Asp175 serves as the catalytic Proton acceptor. A substrate-binding site is contributed by Tyr225.

The protein belongs to the GHMP kinase family. GalK subfamily.

The protein resides in the cytoplasm. It carries out the reaction alpha-D-galactose + ATP = alpha-D-galactose 1-phosphate + ADP + H(+). It functions in the pathway carbohydrate metabolism; galactose metabolism. Catalyzes the transfer of the gamma-phosphate of ATP to D-galactose to form alpha-D-galactose-1-phosphate (Gal-1-P). The chain is Galactokinase from Lactobacillus helveticus (Lactobacillus suntoryeus).